The chain runs to 302 residues: 3-methyl-2-oxobutanoate hydroxymethyltransferase 1 (302 aa).

Mg(2+) is bound by residues Asp-75 and Asp-118. Residues 75–76 (DS), Asp-118, and Lys-147 each bind 3-methyl-2-oxobutanoate. Glu-149 is a Mg(2+) binding site. Glu-217 functions as the Proton acceptor in the catalytic mechanism.

Belongs to the PanB family. In terms of assembly, homodecamer; pentamer of dimers. Requires Mg(2+) as cofactor.

The protein localises to the cytoplasm. The enzyme catalyses 3-methyl-2-oxobutanoate + (6R)-5,10-methylene-5,6,7,8-tetrahydrofolate + H2O = 2-dehydropantoate + (6S)-5,6,7,8-tetrahydrofolate. It participates in cofactor biosynthesis; (R)-pantothenate biosynthesis; (R)-pantoate from 3-methyl-2-oxobutanoate: step 1/2. In terms of biological role, catalyzes the reversible reaction in which hydroxymethyl group from 5,10-methylenetetrahydrofolate is transferred onto alpha-ketoisovalerate to form ketopantoate. The protein is 3-methyl-2-oxobutanoate hydroxymethyltransferase 1 of Zymomonas mobilis subsp. mobilis (strain ATCC 31821 / ZM4 / CP4).